The sequence spans 345 residues: GTPase Obg (345 aa).

An Obg domain is found at 1–159 (MRFIDEASIT…FHLKLELKLL (159 aa)). The OBG-type G domain maps to 160-329 (ADVGIVGLPN…LIQILARQIA (170 aa)). GTP-binding positions include 166–173 (GLPNAGKS), 191–195 (FTTLT), 213–216 (DIPG), 283–286 (NKID), and 310–312 (SAA). Residues Ser173 and Thr193 each coordinate Mg(2+).

The protein belongs to the TRAFAC class OBG-HflX-like GTPase superfamily. OBG GTPase family. Monomer. The cofactor is Mg(2+).

The protein resides in the cytoplasm. An essential GTPase which binds GTP, GDP and possibly (p)ppGpp with moderate affinity, with high nucleotide exchange rates and a fairly low GTP hydrolysis rate. Plays a role in control of the cell cycle, stress response, ribosome biogenesis and in those bacteria that undergo differentiation, in morphogenesis control. The chain is GTPase Obg from Desulforapulum autotrophicum (strain ATCC 43914 / DSM 3382 / VKM B-1955 / HRM2) (Desulfobacterium autotrophicum).